Reading from the N-terminus, the 62-residue chain is Large ribosomal subunit protein uL30 (62 aa).

It belongs to the universal ribosomal protein uL30 family. Part of the 50S ribosomal subunit.

The chain is Large ribosomal subunit protein uL30 from Ruegeria pomeroyi (strain ATCC 700808 / DSM 15171 / DSS-3) (Silicibacter pomeroyi).